Consider the following 142-residue polypeptide: Large ribosomal subunit protein uL11 (142 aa).

This sequence belongs to the universal ribosomal protein uL11 family. As to quaternary structure, part of the ribosomal stalk of the 50S ribosomal subunit. Interacts with L10 and the large rRNA to form the base of the stalk. L10 forms an elongated spine to which L12 dimers bind in a sequential fashion forming a multimeric L10(L12)X complex. Post-translationally, one or more lysine residues are methylated.

Functionally, forms part of the ribosomal stalk which helps the ribosome interact with GTP-bound translation factors. In Acinetobacter baumannii (strain AB307-0294), this protein is Large ribosomal subunit protein uL11.